The sequence spans 214 residues: Rhodanese-like domain-containing protein 10 (214 aa).

In terms of domain architecture, Rhodanese spans 58–182 (ASEGYILLDV…VSEGDFPEIE (125 aa)). C142 functions as the Cysteine persulfide intermediate in the catalytic mechanism. A helical transmembrane segment spans residues 190–206 (ATIGGVSFYLLKLLVLL).

It localises to the membrane. The polypeptide is Rhodanese-like domain-containing protein 10 (STR10) (Arabidopsis thaliana (Mouse-ear cress)).